We begin with the raw amino-acid sequence, 281 residues long: Imidazoleglycerol-phosphate dehydratase, chloroplastic (281 aa).

The transit peptide at 1–85 directs the protein to the chloroplast; sequence MELYAASHSL…TSLPFHPETR (85 aa). Residues Glu-95, 121-129, 147-151, Arg-173, and Arg-195 each bind substrate; these read HMLDQLASH and HHTNE. Residues His-121, His-147, His-148, and Glu-151 each contribute to the Mn(2+) site. The Mn(2+) site is built by His-219, His-243, His-244, and Glu-247. Residues 243 to 251 and 273 to 275 contribute to the substrate site; these read HHIIEATFK and SSK.

Belongs to the imidazoleglycerol-phosphate dehydratase family. Requires Mn(2+) as cofactor.

The protein localises to the plastid. Its subcellular location is the chloroplast. The catalysed reaction is D-erythro-1-(imidazol-4-yl)glycerol 3-phosphate = 3-(imidazol-4-yl)-2-oxopropyl phosphate + H2O. It participates in amino-acid biosynthesis; L-histidine biosynthesis; L-histidine from 5-phospho-alpha-D-ribose 1-diphosphate: step 6/9. This chain is Imidazoleglycerol-phosphate dehydratase, chloroplastic, found in Pisum sativum (Garden pea).